Reading from the N-terminus, the 416-residue chain is Alpha-1-antiproteinase (416 aa).

Positions 1 to 24 (MALSITRGLLLLAALCCLAPTSLA) are cleaved as a signal peptide. Residues asparagine 68, asparagine 105, asparagine 143, and asparagine 269 are each glycosylated (N-linked (GlcNAc...) asparagine). The RCL stretch occupies residues 371 to 390 (GATFLEAIPMSLPPDVEFNR). A Phosphoserine modification is found at serine 381.

The protein belongs to the serpin family. Interacts with CELA2A. Interacts with ERGIC3 and LMAN1/ERGIC53. Interacts with PRSS1/Trypsin. As to expression, plasma.

The protein resides in the secreted. In terms of biological role, inhibits human leukocyte elastase, pig pancreatic elastase and bovine trypsin on a 1:1 molar basis. The polypeptide is Alpha-1-antiproteinase (Ovis aries (Sheep)).